The primary structure comprises 280 residues: Pyridoxal 5'-phosphate synthase subunit PdxS (280 aa).

Residue aspartate 12 participates in D-ribose 5-phosphate binding. The active-site Schiff-base intermediate with D-ribose 5-phosphate is lysine 69. Residue glycine 141 participates in D-ribose 5-phosphate binding. Arginine 153 contacts D-glyceraldehyde 3-phosphate. D-ribose 5-phosphate contacts are provided by residues glycine 202 and 223–224 (GS).

This sequence belongs to the PdxS/SNZ family. As to quaternary structure, in the presence of PdxT, forms a dodecamer of heterodimers.

It catalyses the reaction aldehydo-D-ribose 5-phosphate + D-glyceraldehyde 3-phosphate + L-glutamine = pyridoxal 5'-phosphate + L-glutamate + phosphate + 3 H2O + H(+). It participates in cofactor biosynthesis; pyridoxal 5'-phosphate biosynthesis. In terms of biological role, catalyzes the formation of pyridoxal 5'-phosphate from ribose 5-phosphate (RBP), glyceraldehyde 3-phosphate (G3P) and ammonia. The ammonia is provided by the PdxT subunit. Can also use ribulose 5-phosphate and dihydroxyacetone phosphate as substrates, resulting from enzyme-catalyzed isomerization of RBP and G3P, respectively. This chain is Pyridoxal 5'-phosphate synthase subunit PdxS, found in Fusobacterium nucleatum subsp. nucleatum (strain ATCC 25586 / DSM 15643 / BCRC 10681 / CIP 101130 / JCM 8532 / KCTC 2640 / LMG 13131 / VPI 4355).